The sequence spans 50 residues: Toxic protein HokE (50 aa).

Residues 5–25 (YALAAVIVLCLTVLGFTLLVG) traverse the membrane as a helical segment.

Belongs to the Hok/Gef family.

Its subcellular location is the cell inner membrane. Functionally, toxic component of a type I toxin-antitoxin (TA) system; if it expressed it could be neutralized by antisense antitoxin RNA SokE. The polypeptide is Toxic protein HokE (Escherichia coli (strain K12)).